Reading from the N-terminus, the 363-residue chain is D-proline dehydrogenase (363 aa).

Residue 3 to 17 (VAIVGGGIIGLFTAY) participates in FAD binding.

Belongs to the DadA oxidoreductase family. As to quaternary structure, homotetramer. Requires FAD as cofactor.

It is found in the cell membrane. The enzyme catalyses D-proline + A = 1-pyrroline-2-carboxylate + AH2. Functionally, catalyzes the dehydrogenation of D-proline. Can also use other D-amino acids, but with lower efficiency. The chain is D-proline dehydrogenase (dpdh) from Pyrobaculum islandicum (strain DSM 4184 / JCM 9189 / GEO3).